A 110-amino-acid chain; its full sequence is MMEEERFKAEIFHVTQEVCNRTASELTESESRNVIVDELFCVGVTEMVWEQIRVLAKDIEAFAEHAGRKTVQPQDVLLCCRRNEGLYEIINNFHKESIKSKKKKKENSTT.

It belongs to the TAF9 family. CENP-S/MHF1 subfamily. In terms of assembly, the MHF histone-fold complex is a heterotetramer of 2 mhf1-mhf2 heterodimers. Component of the inner kinetochore constitutive centromere-associated network (CCAN) (also known as central kinetochore Sim4 complex in fission yeast), which is composed of at least cnl2, cnp3, cnp20, fta1, fta2, fta3, fta4, fta6, fta7, mal2, mhf1, mhf2, mis6, mis15, mis17, sim4 and wip1.

Its subcellular location is the nucleus. Functionally, component of a FANCM-MHF complex that promotes gene conversion at blocked replication forks, probably by reversal of the stalled fork. FANCM-MHF promotes non-crossover recombination. In Schizosaccharomyces pombe (strain 972 / ATCC 24843) (Fission yeast), this protein is Inner kinetochore subunit mhf1.